A 121-amino-acid polypeptide reads, in one-letter code: Large ribosomal subunit protein uL22 (121 aa).

It belongs to the universal ribosomal protein uL22 family. Part of the 50S ribosomal subunit.

Its function is as follows. This protein binds specifically to 23S rRNA; its binding is stimulated by other ribosomal proteins, e.g. L4, L17, and L20. It is important during the early stages of 50S assembly. It makes multiple contacts with different domains of the 23S rRNA in the assembled 50S subunit and ribosome. The globular domain of the protein is located near the polypeptide exit tunnel on the outside of the subunit, while an extended beta-hairpin is found that lines the wall of the exit tunnel in the center of the 70S ribosome. The sequence is that of Large ribosomal subunit protein uL22 from Synechococcus sp. (strain CC9605).